The primary structure comprises 517 residues: Tyrosine 3-monooxygenase (517 aa).

Ser-33 is subject to Phosphoserine; by PKA. Fe cation is bound by residues His-345, His-350, and Glu-390.

The protein belongs to the biopterin-dependent aromatic amino acid hydroxylase family. Fe(2+) is required as a cofactor.

Its subcellular location is the cytoplasm. The protein resides in the perinuclear region. It localises to the cell projection. It is found in the axon. It carries out the reaction (6R)-L-erythro-5,6,7,8-tetrahydrobiopterin + L-tyrosine + O2 = (4aS,6R)-4a-hydroxy-L-erythro-5,6,7,8-tetrahydrobiopterin + L-dopa. Its pathway is catecholamine biosynthesis; dopamine biosynthesis; dopamine from L-tyrosine: step 1/2. With respect to regulation, phosphorylation leads to an increase in the catalytic activity. Functionally, involved in the synthesis of catecholamines, such as dopamine. Has a role in serotonin signaling. Required for normal explorative and foraging behavior. The polypeptide is Tyrosine 3-monooxygenase (cat-2) (Caenorhabditis briggsae).